Consider the following 301-residue polypeptide: Ribonuclease H2 subunit A (301 aa).

The residue at position 1 (Met1) is an N-acetylmethionine. An RNase H type-2 domain is found at 28 to 251; it reads PCVLGVDEAG…AQAILEKEAE (224 aa). Positions 34, 35, and 142 each coordinate a divalent metal cation. Thr217 is modified (phosphothreonine). The segment covering 255–264 has biased composition (acidic residues); it reads WEDSEAEEDP. Residues 255–284 are disordered; sequence WEDSEAEEDPERPGKITSYFSQGPQTCRPQ. Ser258 carries the post-translational modification Phosphoserine. Positions 272–282 are enriched in polar residues; it reads SYFSQGPQTCR.

The protein belongs to the RNase HII family. Eukaryotic subfamily. In terms of assembly, the RNase H2 complex is a heterotrimer composed of the catalytic subunit RNASEH2A and the non-catalytic subunits RNASEH2B and RNASEH2C. Requires Mn(2+) as cofactor. Mg(2+) serves as cofactor.

It is found in the nucleus. The catalysed reaction is Endonucleolytic cleavage to 5'-phosphomonoester.. In terms of biological role, catalytic subunit of RNase HII, an endonuclease that specifically degrades the RNA of RNA:DNA hybrids. Participates in DNA replication, possibly by mediating the removal of lagging-strand Okazaki fragment RNA primers during DNA replication. Mediates the excision of single ribonucleotides from DNA:RNA duplexes. The polypeptide is Ribonuclease H2 subunit A (Rnaseh2a) (Mus musculus (Mouse)).